A 518-amino-acid chain; its full sequence is MSISHSDTVLIIDFGSQVTQLIARRVRAMGVYCEVVPFQLALEGMQRIKPKAVILSGSPYSVIDEGSPRAPMEIFEMDIPVLGICYGQQIMCVQLGGKVASGHEREFGRAFLEVQENSALFEGVWEKGSCYQVWMSHGDRVTALPEGFRVIGTSKGAPYAAIADEKRRLYAVQFHPEVVHTLDGTKLLQNFVLKISNLKGNWSMASYREQTIAKIRQKVGKSRVICGLSGGVDSSVVAVLLHEAIGDQLTCILVDHGLMRKNEAQEVLTLFRDHYNIKLIHVNAANMFLNALEGEIDPEKKRKTIGRLFIEVFEEETKKIGGAEFLAQGTLYPDVIESISAIGKSVTIKSHHNVGGLPERMNMKLVEPLRELFKDEVRSLGKELGLPEQFIGRHPFPGPGLAIRCPGAVTREKLEILREADAIYLDEIRKAGLYDEIWQAFAILLPVQTVGVMGDGRTYEFVCALRAVTSVDGMSADFYPYDMEFLSKTAARIINEVRGINRVVYDVTSKPPGTIEWE.

The 194-residue stretch at 8-201 (TVLIIDFGSQ…VLKISNLKGN (194 aa)) folds into the Glutamine amidotransferase type-1 domain. C85 functions as the Nucleophile in the catalytic mechanism. Active-site residues include H175 and E177. The GMPS ATP-PPase domain occupies 202-393 (WSMASYREQT…LGLPEQFIGR (192 aa)). An ATP-binding site is contributed by 229–235 (SGGVDSS).

In terms of assembly, homodimer.

The enzyme catalyses XMP + L-glutamine + ATP + H2O = GMP + L-glutamate + AMP + diphosphate + 2 H(+). The protein operates within purine metabolism; GMP biosynthesis; GMP from XMP (L-Gln route): step 1/1. Its function is as follows. Catalyzes the synthesis of GMP from XMP. This is GMP synthase [glutamine-hydrolyzing] from Bartonella henselae (strain ATCC 49882 / DSM 28221 / CCUG 30454 / Houston 1) (Rochalimaea henselae).